The primary structure comprises 212 residues: MEIACPDWSHESAAFAEGFTCIVGVDEVGRGPLAGPVTAAAVRLFPGRIPEGLNDSKKLPAARREALAAEILAVAEVSVAHASVEEIDRLNILQASHLAMARALAGLPCPPDFALIDGHLIPKGLAHRCRAIVKGDALCLSIAAASIVAKVARDRIMVDLEQQHPGYGWRTNAGYGTRDHLQALLNLGLTPHHRRSFKPVHNILYQEASVSP.

The 190-residue stretch at 20-209 (TCIVGVDEVG…VHNILYQEAS (190 aa)) folds into the RNase H type-2 domain. Positions 26, 27, and 117 each coordinate a divalent metal cation.

It belongs to the RNase HII family. Mn(2+) serves as cofactor. It depends on Mg(2+) as a cofactor.

It localises to the cytoplasm. It catalyses the reaction Endonucleolytic cleavage to 5'-phosphomonoester.. Endonuclease that specifically degrades the RNA of RNA-DNA hybrids. In Cereibacter sphaeroides (strain ATCC 17025 / ATH 2.4.3) (Rhodobacter sphaeroides), this protein is Ribonuclease HII.